A 320-amino-acid polypeptide reads, in one-letter code: Cytochrome f (320 aa).

Residues 1-35 (MQTKNTFSWIKKEIIRSISVSLMIYIIARTSISNA) form the signal peptide. Residues Y36, C56, C59, and H60 each coordinate heme. Residues 286–306 (VQGLLFFLASVILAQIFLVLK) form a helical membrane-spanning segment.

This sequence belongs to the cytochrome f family. The 4 large subunits of the cytochrome b6-f complex are cytochrome b6, subunit IV (17 kDa polypeptide, petD), cytochrome f and the Rieske protein, while the 4 small subunits are PetG, PetL, PetM and PetN. The complex functions as a dimer. Requires heme as cofactor.

It localises to the plastid. The protein resides in the chloroplast thylakoid membrane. Component of the cytochrome b6-f complex, which mediates electron transfer between photosystem II (PSII) and photosystem I (PSI), cyclic electron flow around PSI, and state transitions. The sequence is that of Cytochrome f from Eucalyptus globulus subsp. globulus (Tasmanian blue gum).